Consider the following 214-residue polypeptide: Cytochrome b (214 aa).

A run of 4 helical transmembrane segments spans residues 31–51, 75–96, 111–131, and 176–196; these read FGSM…FLAI, WIMQ…YIHI, WLSG…GYVL, and FFAL…IHIL. Heme b is bound by residues His81 and His95. Heme b contacts are provided by His180 and His194. Residue His199 participates in a ubiquinone binding.

Belongs to the cytochrome b family. As to quaternary structure, the cytochrome bc1 complex contains 3 respiratory subunits (MT-CYB, CYC1 and UQCRFS1), 2 core proteins (UQCRC1 and UQCRC2) and probably 6 low-molecular weight proteins. Heme b is required as a cofactor.

Its subcellular location is the mitochondrion inner membrane. Component of the ubiquinol-cytochrome c reductase complex (complex III or cytochrome b-c1 complex) that is part of the mitochondrial respiratory chain. The b-c1 complex mediates electron transfer from ubiquinol to cytochrome c. Contributes to the generation of a proton gradient across the mitochondrial membrane that is then used for ATP synthesis. The chain is Cytochrome b (MT-CYB) from Trimeresurus stejnegeri (Chinese green tree viper).